The sequence spans 387 residues: MAMPFASLSPAADHRPSFIFPFCRSSPLSAVGEEAQQHMMGARWAAAVARPPPFTAAQYEELEQQALIYKYLVAGVPVPADLLLPIRRGLDSLASRFYHHPVLGYGSYFGKKLDPEPGRCRRTDGKKWRCSKEAAPDSKYCERHMHRGRNRSRKPVEAQLVAPHSQPPATAPAAAVTSTAFQNHSLYPAIANGGGANGGGGGGGGGGSAPGSFALGSNTQLHMDNAASYSTVAAGAGNKDFRYSAYGVRPLADEHSPLITGAMDTSIDNSWCLLPSQTSTFSVSSYPMLGNLSELDQNTICSLPKVEREPLSFFGSDYVTVDSGKQENQTLRPFFDEWPKARDSWPDLADDNSLATFSATQLSISIPMATSDFSTTSSRSHNGIYSR.

A QLQ domain is found at 53-88 (PFTAAQYEELEQQALIYKYLVAGVPVPADLLLPIRR). 2 consecutive short sequence motifs (bipartite nuclear localization signal) follow at residues 111–129 (KKLD…KKWR) and 147–154 (RGRNRSRK). In terms of domain architecture, WRC spans 114–158 (DPEPGRCRRTDGKKWRCSKEAAPDSKYCERHMHRGRNRSRKPVEA). Residues 145–176 (MHRGRNRSRKPVEAQLVAPHSQPPATAPAAAV) form a disordered region.

The protein belongs to the GRF family.

It localises to the nucleus. Its function is as follows. Transcription activator that plays a regulatory role in gibberellin-induced stem elongation. The sequence is that of Growth-regulating factor 3 (GRF3) from Oryza sativa subsp. japonica (Rice).